A 443-amino-acid chain; its full sequence is Trigger factor (443 aa).

The PPIase FKBP-type domain occupies 161–246 (GDKVVIDFQG…IKKIMEGKLP (86 aa)).

The protein belongs to the FKBP-type PPIase family. Tig subfamily.

It is found in the cytoplasm. The catalysed reaction is [protein]-peptidylproline (omega=180) = [protein]-peptidylproline (omega=0). Functionally, involved in protein export. Acts as a chaperone by maintaining the newly synthesized protein in an open conformation. Functions as a peptidyl-prolyl cis-trans isomerase. The chain is Trigger factor from Legionella pneumophila (strain Lens).